Here is a 340-residue protein sequence, read N- to C-terminus: Manganese-dependent ADP-ribose/CDP-alcohol diphosphatase (340 aa).

Met1 carries the N-acetylmethionine modification. Residues Asp25, Gln27, Asp74, Asn110, His241, His278, and His280 each coordinate Zn(2+).

Belongs to the ADPRibase-Mn family. As to quaternary structure, monomer. Mg(2+) is required as a cofactor.

The enzyme catalyses CDP-choline + H2O = phosphocholine + CMP + 2 H(+). The catalysed reaction is ADP-D-ribose + H2O = D-ribose 5-phosphate + AMP + 2 H(+). It catalyses the reaction CDP-glycerol + H2O = sn-glycerol 3-phosphate + CMP + 2 H(+). Its function is as follows. Hydrolyzes ADP-ribose, IDP-ribose, CDP-glycerol, CDP-choline and CDP-ethanolamine, but not other non-reducing ADP-sugars or CDP-glucose. May be involved in immune cell signaling as suggested by the second-messenger role of ADP-ribose, which activates TRPM2 as a mediator of oxidative/nitrosative stress. The polypeptide is Manganese-dependent ADP-ribose/CDP-alcohol diphosphatase (Adprm) (Mus musculus (Mouse)).